The chain runs to 465 residues: Antithrombin-III (465 aa).

The N-terminal stretch at 1-32 (MYSPGAGSGAAGERKLCLLSLLLIGALGCAIC) is a signal peptide. 2 disulfides stabilise this stretch: Cys-41-Cys-161 and Cys-54-Cys-128. Residue Thr-64 is modified to Phosphothreonine. Ser-69 carries the post-translational modification Phosphoserine. Trp-82 provides a ligand contact to heparin. Asn-129 carries an N-linked (GlcNAc...) asparagine glycan. Arg-162 serves as a coordination point for heparin. N-linked (GlcNAc...) asparagine glycosylation is present at Asn-168. Residue Arg-178 participates in heparin binding. 2 N-linked (GlcNAc...) asparagine glycosylation sites follow: Asn-188 and Asn-225. Residues Cys-280 and Cys-463 are joined by a disulfide bond.

It belongs to the serpin family. In terms of assembly, forms protease inhibiting heterodimer with TMPRSS7. Post-translationally, phosphorylated by FAM20C in the extracellular medium. As to expression, plasma.

The protein resides in the secreted. It localises to the extracellular space. Functionally, most important serine protease inhibitor in plasma that regulates the blood coagulation cascade. AT-III inhibits thrombin, matriptase-3/TMPRSS7, as well as factors IXa, Xa and XIa. Its inhibitory activity is greatly enhanced in the presence of heparin. This is Antithrombin-III (Serpinc1) from Mus musculus (Mouse).